The chain runs to 89 residues: Small ribosomal subunit protein uS15 (89 aa).

Belongs to the universal ribosomal protein uS15 family. Part of the 30S ribosomal subunit. Forms a bridge to the 50S subunit in the 70S ribosome, contacting the 23S rRNA.

Functionally, one of the primary rRNA binding proteins, it binds directly to 16S rRNA where it helps nucleate assembly of the platform of the 30S subunit by binding and bridging several RNA helices of the 16S rRNA. Forms an intersubunit bridge (bridge B4) with the 23S rRNA of the 50S subunit in the ribosome. The chain is Small ribosomal subunit protein uS15 from Limosilactobacillus fermentum (strain NBRC 3956 / LMG 18251) (Lactobacillus fermentum).